The primary structure comprises 628 residues: Kinesin-like protein KIN-10B (628 aa).

Residues Asn-20 to Ile-340 enclose the Kinesin motor domain. Gly-114–Thr-121 serves as a coordination point for ATP. The disordered stretch occupies residues Ser-496–Pro-519. A compositionally biased stretch (polar residues) spans Ile-498 to Gly-509.

It belongs to the TRAFAC class myosin-kinesin ATPase superfamily. Kinesin family. KIN-10 subfamily.

The sequence is that of Kinesin-like protein KIN-10B from Arabidopsis thaliana (Mouse-ear cress).